Consider the following 331-residue polypeptide: CMRF35-like molecule 9 (331 aa).

Positions 1 to 18 are cleaved as a signal peptide; that stretch reads MRPLVLLWGCLVLPGYEA. The region spanning 19-120 is the Ig-like V-type domain; that stretch reads LKGPKEISGF…LGRDESFEVT (102 aa). Over 19–204 the chain is Extracellular; it reads LKGPKEISGF…KPSVSIPMVR (186 aa). Cysteines 37 and 106 form a disulfide. O-linked (GalNAc...) threonine glycosylation is present at T136. O-linked (GalNAc...) serine glycosylation is present at S140. O-linked (GalNAc...) threonine glycosylation is present at T143. S145 carries an O-linked (GalNAc...) serine glycan. O-linked (GalNAc...) threonine glycosylation is found at T150 and T152. O-linked (GalNAc...) serine glycosylation occurs at S154. Residues T164, T181, and T182 are each glycosylated (O-linked (GalNAc...) threonine). O-linked (GalNAc...) serine glycosylation is present at S186. Residues 205–225 traverse the membrane as a helical segment; sequence MMAPVLILLSLLLAAGLIAFG. Over 226 to 331 the chain is Cytoplasmic; it reads SHMLRWRKKA…ELAFSEFISV (106 aa). The span at 278-293 shows a compositional bias: polar residues; sequence NPSAVPSPETQNLSQS. The disordered stretch occupies residues 278-318; it reads NPSAVPSPETQNLSQSTEEEEAARSLDDDKEDVMAPPPLQM.

Belongs to the CD300 family. O-glycosylated with sialylated oligosaccharides. In terms of tissue distribution, expressed in monocyte cell lines. Expressed in certain types of endothelial and myeloid lineage cells. Expressed in mesenteric lymph nodes (LNs), spleen, thymus, lung, heart and kidney. Expressed in high endothelial venules (HEVs) in peripheral and mesenteric LNs (at protein level). Highly expressed in heart. Slightly expressed in spleen and thymus. Isoform 5 is expressed preferentially in heart. Isoform 1 is expressed predominantly in kidney and liver.

It is found in the apical cell membrane. The protein resides in the basolateral cell membrane. Its subcellular location is the endosome. The protein localises to the multivesicular body membrane. Receptor which may mediate L-selectin-dependent lymphocyte rollings. Binds SELL in a calcium dependent manner. Binds lymphocyte. In Mus musculus (Mouse), this protein is CMRF35-like molecule 9 (Cd300lg).